Reading from the N-terminus, the 106-residue chain is PAT complex subunit Asterix (106 aa).

Over residues M1 to R10 the composition is skewed to polar residues. A disordered region spans residues M1–L29. An N-acetylserine modification is found at S2. The Cytoplasmic segment spans residues S2 to P32. The chain crosses the membrane as a helical span at residues T33–L51. K52 is a topological domain (lumenal). A helical membrane pass occupies residues L53–N70. The Cytoplasmic segment spans residues S71–S74. The chain crosses the membrane as a helical span at residues E75–Y95. Topologically, residues L96–W106 are lumenal.

This sequence belongs to the Asterix family. As to quaternary structure, component of the PAT complex, composed of WDR83OS/Asterix and CCDC47. The PAT complex is part of the multi-pass translocon (MPT) complex, composed of three subcomplexes, the GEL complex (composed of RAB5IF/OPTI and TMCO1), the BOS complex (composed of NCLN/Nicalin, NOMO1 and TMEM147) and the PAT complex (composed of WDR83OS/Asterix and CCDC47). The MPT complex associates with the SEC61 complex.

The protein resides in the endoplasmic reticulum membrane. In terms of biological role, component of the multi-pass translocon (MPT) complex that mediates insertion of multi-pass membrane proteins into the lipid bilayer of membranes. The MPT complex takes over after the SEC61 complex: following membrane insertion of the first few transmembrane segments of proteins by the SEC61 complex, the MPT complex occludes the lateral gate of the SEC61 complex to promote insertion of subsequent transmembrane regions. Within the MPT complex, the PAT subcomplex sequesters any highly polar regions in the transmembrane domains away from the non-polar membrane environment until they can be buried in the interior of the fully assembled protein. Within the PAT subcomplex, WDR83OS/Asterix binds to and redirects the substrate to a location behind the SEC61 complex. This chain is PAT complex subunit Asterix (WDR83OS), found in Sus scrofa (Pig).